Reading from the N-terminus, the 441-residue chain is Plasmepsin VI (441 aa).

Over 1-7 (MTNFCIK) the chain is Cytoplasmic. The helical; Signal-anchor for type II membrane protein transmembrane segment at 8-28 (SYLFLYLSFLLFFDIITIFHV) threads the bilayer. The Extracellular segment spans residues 29–441 (SSIRISTVLK…VGVVKSNHNF (413 aa)). A Peptidase A1 domain is found at 109 to 435 (FIGDIEIGNP…DNDHKLVGVV (327 aa)). Residues aspartate 127 and aspartate 324 contribute to the active site.

Belongs to the peptidase A1 family.

It is found in the membrane. Its function is as follows. During the development in the mosquito midgut, plays a role in sporozoite egress from oocysts. The protein is Plasmepsin VI of Plasmodium berghei (strain Anka).